A 607-amino-acid polypeptide reads, in one-letter code: Granule-bound starch synthase 1, chloroplastic/amyloplastic (607 aa).

Residues 1–77 (MASITASHHF…RPGCSATIVC (77 aa)) constitute a chloroplast transit peptide. Residue Lys95 coordinates ADP-alpha-D-glucose. Positions 585 to 607 (SGSEPGVEGEEIAPLAKENVATP) are disordered.

This sequence belongs to the glycosyltransferase 1 family. Bacterial/plant glycogen synthase subfamily.

The protein localises to the plastid. It is found in the chloroplast. It localises to the amyloplast. It carries out the reaction an NDP-alpha-D-glucose + [(1-&gt;4)-alpha-D-glucosyl](n) = [(1-&gt;4)-alpha-D-glucosyl](n+1) + a ribonucleoside 5'-diphosphate + H(+). It functions in the pathway glycan biosynthesis; starch biosynthesis. The sequence is that of Granule-bound starch synthase 1, chloroplastic/amyloplastic (WAXY) from Solanum tuberosum (Potato).